Consider the following 537-residue polypeptide: MAASDADAAEVERLYELGERLSSAKDKSQHAADYEAIISAVKGQSVKAKQLAAQLIPRFFRSFPALAPRAMEAMFDLVDMEELATRIQAIRGFPLLAKDAEFVSKIADILGQLLASEENVERDAVHKALMSLIRQDVKSSLQPLFKHVESGSEIREKVICFLKDKVFPVKAELLKPQAEMERYITDLIKKSVLDVTGLEFKLFMDFLRSLSIFGDSAPRESFQELIEIIQAQADLDAQFNVSDIDHIERWTSCMYMALPIFMRGGSSSKFLNYFVKQIVPVFDKIPEEKKLDLLKTVAASSPYATAQDARQLLPPVVQLLKKYMPGKKVEDINHNYVECLMYIFHHLAHKTPNTTNSLCGYKIVTGQPSDRLGEDFSEHYKDFTERLTGTEETVRAVSKRLTQGMADFNKAISSAKTEEEKTKIKSDQQKSTMTMRAYNNILAMAQPLRAKSPLFIGDKKITLSWMEQPKKPAPTTTGGKRSQPATNGNTPASKKGRGEGAARNQLVNRAFEGLSRGGRGSGRGRGRGGRGRGWGYR.

An ARM-like and Heat-like helical repeats region spans residues 9-363 (AEVERLYELG…TTNSLCGYKI (355 aa)). The segment at 465–537 (WMEQPKKPAP…GGRGRGWGYR (73 aa)) is disordered. The span at 474-492 (PTTTGGKRSQPATNGNTPA) shows a compositional bias: polar residues.

This sequence belongs to the API5 family. In terms of assembly, interacts with AIP1 and AIP2.

It is found in the nucleus. Putative anti-apoptotic factor involved in the regulation of tapetal programmed cell death (PCD) and degeneration during anther development. Interacts directly with the DEAD-box ATP-dependent RNA helicases AIP1 and AIP2 that form dimers and bind the promoter region of the cysteine protease CP1 involved in tapetum PCD. This Oryza sativa subsp. japonica (Rice) protein is Apoptosis inhibitor 5-like protein API5.